An 83-amino-acid chain; its full sequence is MEVKIFAFLQIAVLIAFSLHLASAGSKELSGPESSENSIEAAFCDTNCTEGTDGVWSGCSAGCFCVHVGNSTVGRCMTFNGVD.

The N-terminal stretch at 1–24 (MEVKIFAFLQIAVLIAFSLHLASA) is a signal peptide. 3 disulfide bridges follow: C44/C63, C48/C65, and C59/C76. N-linked (GlcNAc...) asparagine glycosylation is present at N47. N-linked (GlcNAc...) asparagine glycosylation is present at N70.

The protein localises to the secreted. Its function is as follows. Salivary chemokine-binding protein which binds to host chemokines CXCL1, CXCL2, CXCL3, CXCL5, CXCL6, CXCL10, CXCL11 and CXCL13. This Ixodes ricinus (Common tick) protein is Evasin P1090.